A 313-amino-acid chain; its full sequence is MSSTNQSSVTEFLLLGLSRQPQQQQLLFLLFLIMYLATVLGNLLIILAIGTDSRLHTPMYFFLSNLSFVDVCFSSTTVPKVLANHILGSQAISFSGCLTQLYFLAVFGNMDNFLLAVMSYDRFVAICHPLHYTTKMTRQLCVLLVVGSWVVANMNCLLHILLMARLSFCADNMIPHFFCDGTPLLKLSCSDTHLNELMILTEGAVVMVTPFVCILISYIHITCAVLRVSSPRGGWKSFSTCGSHLAVVCLFYGTVIAVYFNPSSSHLAGRDMAAAVMYAVVTPMLNPFIYSLRNSDMKAALRKVLAMRFPSKQ.

Residues Met-1 to Gln-25 lie on the Extracellular side of the membrane. N-linked (GlcNAc...) asparagine glycosylation is present at Asn-5. The chain crosses the membrane as a helical span at residues Leu-26–Gly-50. Topologically, residues Thr-51–Thr-57 are cytoplasmic. Residues Pro-58–Pro-79 form a helical membrane-spanning segment. Residues Lys-80–Gln-100 are Extracellular-facing. Cys-97 and Cys-189 are disulfide-bonded. A helical transmembrane segment spans residues Leu-101–Tyr-120. Residues Asp-121–Gln-139 are Cytoplasmic-facing. Residues Leu-140 to Leu-158 traverse the membrane as a helical segment. Residues His-159–Glu-196 are Extracellular-facing. The helical transmembrane segment at Leu-197–Ile-219 threads the bilayer. The Cytoplasmic portion of the chain corresponds to His-220–Lys-236. The helical transmembrane segment at Ser-237–Phe-260 threads the bilayer. Topologically, residues Asn-261–Met-272 are extracellular. A helical transmembrane segment spans residues Ala-273–Leu-292. Residues Arg-293–Gln-313 lie on the Cytoplasmic side of the membrane.

This sequence belongs to the G-protein coupled receptor 1 family. In terms of tissue distribution, olfactory epithelium.

The protein resides in the cell membrane. Its function is as follows. Odorant receptor. This is Olfactory receptor 1f45 (Or1f45) from Rattus norvegicus (Rat).